The primary structure comprises 426 residues: Serine--tRNA ligase (426 aa).

Position 233-235 (233-235 (TAE)) interacts with L-serine. 264 to 266 (RSE) is an ATP binding site. Residue glutamate 287 coordinates L-serine. Residue 351-354 (EISS) participates in ATP binding. Serine 387 provides a ligand contact to L-serine.

It belongs to the class-II aminoacyl-tRNA synthetase family. Type-1 seryl-tRNA synthetase subfamily. As to quaternary structure, homodimer. The tRNA molecule binds across the dimer.

Its subcellular location is the cytoplasm. It catalyses the reaction tRNA(Ser) + L-serine + ATP = L-seryl-tRNA(Ser) + AMP + diphosphate + H(+). It carries out the reaction tRNA(Sec) + L-serine + ATP = L-seryl-tRNA(Sec) + AMP + diphosphate + H(+). It participates in aminoacyl-tRNA biosynthesis; selenocysteinyl-tRNA(Sec) biosynthesis; L-seryl-tRNA(Sec) from L-serine and tRNA(Sec): step 1/1. Functionally, catalyzes the attachment of serine to tRNA(Ser). Is also able to aminoacylate tRNA(Sec) with serine, to form the misacylated tRNA L-seryl-tRNA(Sec), which will be further converted into selenocysteinyl-tRNA(Sec). The chain is Serine--tRNA ligase from Clostridium tetani (strain Massachusetts / E88).